The following is a 236-amino-acid chain: 2,3,4,5-tetrahydropyridine-2,6-dicarboxylate N-acetyltransferase (236 aa).

It belongs to the transferase hexapeptide repeat family. DapH subfamily.

The enzyme catalyses (S)-2,3,4,5-tetrahydrodipicolinate + acetyl-CoA + H2O = L-2-acetamido-6-oxoheptanedioate + CoA. The protein operates within amino-acid biosynthesis; L-lysine biosynthesis via DAP pathway; LL-2,6-diaminopimelate from (S)-tetrahydrodipicolinate (acetylase route): step 1/3. Its function is as follows. Catalyzes the transfer of an acetyl group from acetyl-CoA to tetrahydrodipicolinate. The chain is 2,3,4,5-tetrahydropyridine-2,6-dicarboxylate N-acetyltransferase from Clostridium botulinum (strain Langeland / NCTC 10281 / Type F).